The primary structure comprises 94 residues: MSKSIKHANTIRLPDTADQFARRVHINVRGEKVTMVYRWKDHKSPKAHTQRMTLDDKQVGRLMGALTMAADNVVGDNRERLVEFGAGMQEIIEK.

The protein is Gene 4.5 protein (4.5) of Enterobacteria phage T3 (Bacteriophage T3).